We begin with the raw amino-acid sequence, 426 residues long: Isovaleryl-CoA dehydrogenase, mitochondrial (426 aa).

The N-terminal 32 residues, 1-32 (MATAAWLLGRRVASWRMRPPLQSLAGLITQRT), are a transit peptide targeting the mitochondrion. Lys58 and Lys78 each carry N6-acetyllysine; alternate. 2 positions are modified to N6-succinyllysine; alternate: Lys58 and Lys78. FAD-binding positions include 165 to 174 (LAMSEPNAGS) and 198 to 200 (WIT). Ser174 provides a ligand contact to substrate. 222–223 (SR) is a substrate binding site. Lys241 is modified (N6-acetyllysine). Substrate is bound by residues Tyr277 and 284-287 (DLER). Glu286 acts as the Proton acceptor in catalysis. Arg312 provides a ligand contact to FAD. An N6-succinyllysine modification is found at Lys318. FAD is bound by residues Gln323 and 380–384 (QCLGG). 407–408 (AG) is a substrate binding site. 409-411 (TSE) is a binding site for FAD.

It belongs to the acyl-CoA dehydrogenase family. Homotetramer. It depends on FAD as a cofactor.

The protein localises to the mitochondrion matrix. It carries out the reaction 3-methylbutanoyl-CoA + oxidized [electron-transfer flavoprotein] + H(+) = 3-methylbut-2-enoyl-CoA + reduced [electron-transfer flavoprotein]. The enzyme catalyses pentanoyl-CoA + oxidized [electron-transfer flavoprotein] + H(+) = (2E)-pentenoyl-CoA + reduced [electron-transfer flavoprotein]. It catalyses the reaction hexanoyl-CoA + oxidized [electron-transfer flavoprotein] + H(+) = (2E)-hexenoyl-CoA + reduced [electron-transfer flavoprotein]. The catalysed reaction is butanoyl-CoA + oxidized [electron-transfer flavoprotein] + H(+) = (2E)-butenoyl-CoA + reduced [electron-transfer flavoprotein]. It participates in amino-acid degradation; L-leucine degradation; (S)-3-hydroxy-3-methylglutaryl-CoA from 3-isovaleryl-CoA: step 1/3. Its function is as follows. Catalyzes the conversion of isovaleryl-CoA/3-methylbutanoyl-CoA to 3-methylbut-2-enoyl-CoA as an intermediate step in the leucine (Leu) catabolic pathway. To a lesser extent, is also able to catalyze the oxidation of other saturated short-chain acyl-CoA thioesters as pentanoyl-CoA, hexenoyl-CoA and butenoyl-CoA. The sequence is that of Isovaleryl-CoA dehydrogenase, mitochondrial (IVD) from Bos taurus (Bovine).